The following is a 493-amino-acid chain: 3-octaprenyl-4-hydroxybenzoate carboxy-lyase (493 aa).

Asparagine 172 contacts Mn(2+). Residues 175-177 (IYR), 189-191 (RWL), and 194-195 (RG) each bind prenylated FMN. Glutamate 238 is a Mn(2+) binding site. The active-site Proton donor is aspartate 287.

The protein belongs to the UbiD family. Homohexamer. Prenylated FMN is required as a cofactor. Requires Mn(2+) as cofactor.

The protein localises to the cell membrane. The catalysed reaction is a 4-hydroxy-3-(all-trans-polyprenyl)benzoate + H(+) = a 2-(all-trans-polyprenyl)phenol + CO2. The protein operates within cofactor biosynthesis; ubiquinone biosynthesis. Its function is as follows. Catalyzes the decarboxylation of 3-octaprenyl-4-hydroxy benzoate to 2-octaprenylphenol, an intermediate step in ubiquinone biosynthesis. The protein is 3-octaprenyl-4-hydroxybenzoate carboxy-lyase of Cellvibrio japonicus (strain Ueda107) (Pseudomonas fluorescens subsp. cellulosa).